We begin with the raw amino-acid sequence, 310 residues long: N-acetylmuramic acid 6-phosphate etherase (310 aa).

In terms of domain architecture, SIS spans 64-227; it reads ITARLKSKGR…STSVMIKLGK (164 aa). The Proton donor role is filled by Glu-92. The active site involves Glu-123.

It belongs to the GCKR-like family. MurNAc-6-P etherase subfamily. Homodimer.

The enzyme catalyses N-acetyl-D-muramate 6-phosphate + H2O = N-acetyl-D-glucosamine 6-phosphate + (R)-lactate. Its pathway is amino-sugar metabolism; N-acetylmuramate degradation. In terms of biological role, specifically catalyzes the cleavage of the D-lactyl ether substituent of MurNAc 6-phosphate, producing GlcNAc 6-phosphate and D-lactate. The sequence is that of N-acetylmuramic acid 6-phosphate etherase from Prochlorococcus marinus (strain NATL1A).